A 342-amino-acid polypeptide reads, in one-letter code: Hydrogenase expression/formation protein HupV (342 aa).

The protein belongs to the HupK family.

The chain is Hydrogenase expression/formation protein HupV (hupV) from Azotobacter chroococcum mcd 1.